Here is a 511-residue protein sequence, read N- to C-terminus: Pentatricopeptide repeat-containing protein At5g08510 (511 aa).

10 PPR repeats span residues 46–80 (CTFL…GLRP), 81–115 (SHHT…GFES), 116–146 (DSFC…MSKR), 147–181 (DVPV…NVTS), 182–213 (WTTV…SVKP), 214–248 (NHIT…GFFD), 249–279 (NIYV…LGNQ), 281–315 (NLCS…GEKP), 316–346 (DAVT…MEEV), and 352–382 (KLEH…MPMK). Positions 387–462 (VWGTLLGACS…AAGYSYFVEV (76 aa)) are type E motif. The interval 463–494 (GVDVHKFTVEDKSHPRSYEIYQVLEEIFRRMK) is type E(+) motif.

The protein belongs to the PPR family. PCMP-E subfamily.

The protein is Pentatricopeptide repeat-containing protein At5g08510 (PCMP-E20) of Arabidopsis thaliana (Mouse-ear cress).